The chain runs to 200 residues: Phospholipase A2 inhibitor gamma subunit A (200 aa).

The first 19 residues, 1–19 (MKSLHTICLLFIFIARGNS), serve as a signal peptide directing secretion. Disulfide bonds link Cys-22–Cys-46, Cys-25–Cys-32, Cys-39–Cys-67, Cys-73–Cys-94, Cys-95–Cys-100, Cys-118–Cys-143, Cys-136–Cys-165, and Cys-169–Cys-191. Residue Asn-176 is glycosylated (N-linked (GlcNAc...) asparagine).

It belongs to the CNF-like-inhibitor family. In terms of assembly, occurs as a mixture of oligomers. Tetrameric arrangement appears to be the predominant quaternary structure. Expressed by the liver.

The protein resides in the secreted. Functionally, inhibits the enzymatic activity of phospholipase A2 (PA2). This chain is Phospholipase A2 inhibitor gamma subunit A, found in Gloydius brevicaudus siniticus (Chinese mamushi).